Reading from the N-terminus, the 55-residue chain is Small ribosomal subunit protein bS21 (55 aa).

It belongs to the bacterial ribosomal protein bS21 family.

The sequence is that of Small ribosomal subunit protein bS21 from Ureaplasma parvum serovar 3 (strain ATCC 27815 / 27 / NCTC 11736).